Consider the following 375-residue polypeptide: Venom allergen 5 (375 aa).

The signal sequence occupies residues 1–26 (MSAPVGIPSLLLALCALLCVLNAVRS). The SCP domain maps to 66 to 210 (VRLHNNLRSK…RRYTQIVCNY (145 aa)). N-linked (GlcNAc...) asparagine glycans are attached at residues asparagine 300 and asparagine 366.

The protein belongs to the CRISP family. Venom allergen 5-like subfamily. In terms of processing, contains 9 disulfide bonds. As to expression, expressed by the venom gland.

The protein resides in the secreted. This is Venom allergen 5 from Lycosa singoriensis (Wolf spider).